The chain runs to 71 residues: Protein SlyX homolog (71 aa).

Belongs to the SlyX family.

In Thioalkalivibrio sulfidiphilus (strain HL-EbGR7), this protein is Protein SlyX homolog.